We begin with the raw amino-acid sequence, 334 residues long: Ornithine carbamoyltransferase (334 aa).

Residues 57 to 60 (STRT), Gln84, Arg108, and 135 to 138 (HPTQ) contribute to the carbamoyl phosphate site. Residues Asn169, Asp233, and 237 to 238 (SM) contribute to the L-ornithine site. Residues 275 to 276 (CL) and Arg320 contribute to the carbamoyl phosphate site.

This sequence belongs to the aspartate/ornithine carbamoyltransferase superfamily. OTCase family.

The protein resides in the cytoplasm. The enzyme catalyses carbamoyl phosphate + L-ornithine = L-citrulline + phosphate + H(+). The protein operates within amino-acid biosynthesis; L-arginine biosynthesis; L-arginine from L-ornithine and carbamoyl phosphate: step 1/3. Its function is as follows. Reversibly catalyzes the transfer of the carbamoyl group from carbamoyl phosphate (CP) to the N(epsilon) atom of ornithine (ORN) to produce L-citrulline. This Aeromonas hydrophila subsp. hydrophila (strain ATCC 7966 / DSM 30187 / BCRC 13018 / CCUG 14551 / JCM 1027 / KCTC 2358 / NCIMB 9240 / NCTC 8049) protein is Ornithine carbamoyltransferase.